A 103-amino-acid chain; its full sequence is Large ribosomal subunit protein bL21 (103 aa).

This sequence belongs to the bacterial ribosomal protein bL21 family. As to quaternary structure, part of the 50S ribosomal subunit. Contacts protein L20.

In terms of biological role, this protein binds to 23S rRNA in the presence of protein L20. This chain is Large ribosomal subunit protein bL21, found in Shewanella sp. (strain ANA-3).